Here is a 114-residue protein sequence, read N- to C-terminus: NADH-ubiquinone oxidoreductase chain 3 (114 aa).

The next 3 membrane-spanning stretches (helical) occupy residues 4–24 (LVYIVFTIVLTVGLILVSYLL), 55–75 (FYLIAILFIIFDLEVVFILPF), and 82–102 (VSLLGGWITIIFLVILTIGFI).

This sequence belongs to the complex I subunit 3 family.

The protein resides in the mitochondrion membrane. It catalyses the reaction a ubiquinone + NADH + 5 H(+)(in) = a ubiquinol + NAD(+) + 4 H(+)(out). Its function is as follows. Core subunit of the mitochondrial membrane respiratory chain NADH dehydrogenase (Complex I) that is believed to belong to the minimal assembly required for catalysis. Complex I functions in the transfer of electrons from NADH to the respiratory chain. The immediate electron acceptor for the enzyme is believed to be ubiquinone. This Allomyces macrogynus protein is NADH-ubiquinone oxidoreductase chain 3 (ND3).